A 280-amino-acid chain; its full sequence is Equatorin (280 aa).

The signal sequence occupies residues 1–19; that stretch reads MDFILLIFLSGVFLPNIFS. Residues 20 to 183 are Vesicular-facing; the sequence is LQPTVEQDPG…LSELEEIKLK (164 aa). A disordered region spans residues 112-131; that stretch reads ATASGEEDKRSEPSRKSSTP. The segment covering 117–126 has biased composition (basic and acidic residues); sequence EEDKRSEPSR. N-linked (GlcNAc...) asparagine glycosylation is present at N145. A helical transmembrane segment spans residues 184–204; sequence LMLGISLMTLILLIPLLIFCF. The Cytoplasmic segment spans residues 205-280; that stretch reads ATLYKLRHLR…AEVTEERISE (76 aa). S279 carries the phosphoserine modification.

Interacts with SNAP25. Post-translationally, highly N- and O-glycosylated; contains sialic acid. As to expression, highly expressed in testis and epididymis. Low expression in other tissues.

The protein localises to the cytoplasmic vesicle. The protein resides in the secretory vesicle. It localises to the acrosome membrane. It is found in the acrosome inner membrane. Its subcellular location is the acrosome outer membrane. Acrosomal membrane-anchored protein involved in the process of fertilization and in acrosome biogenesis. The protein is Equatorin (Eqtn) of Rattus norvegicus (Rat).